Reading from the N-terminus, the 75-residue chain is Small ribosomal subunit protein bS16 (75 aa).

Belongs to the bacterial ribosomal protein bS16 family.

In Aliarcobacter butzleri (strain RM4018) (Arcobacter butzleri), this protein is Small ribosomal subunit protein bS16.